Consider the following 325-residue polypeptide: Ribonuclease Z (325 aa).

The Zn(2+) site is built by histidine 63, histidine 65, aspartate 67, histidine 68, histidine 147, aspartate 218, and histidine 276. Aspartate 67 (proton acceptor) is an active-site residue.

This sequence belongs to the RNase Z family. As to quaternary structure, homodimer. It depends on Zn(2+) as a cofactor.

It catalyses the reaction Endonucleolytic cleavage of RNA, removing extra 3' nucleotides from tRNA precursor, generating 3' termini of tRNAs. A 3'-hydroxy group is left at the tRNA terminus and a 5'-phosphoryl group is left at the trailer molecule.. Zinc phosphodiesterase, which displays some tRNA 3'-processing endonuclease activity. Probably involved in tRNA maturation, by removing a 3'-trailer from precursor tRNA. The protein is Ribonuclease Z of Oenococcus oeni (strain ATCC BAA-331 / PSU-1).